The sequence spans 285 residues: Probable endonuclease 4 (285 aa).

The Zn(2+) site is built by H69, H109, E145, D179, H182, H216, D229, H231, and E261.

The protein belongs to the AP endonuclease 2 family. Zn(2+) is required as a cofactor.

It catalyses the reaction Endonucleolytic cleavage to 5'-phosphooligonucleotide end-products.. Endonuclease IV plays a role in DNA repair. It cleaves phosphodiester bonds at apurinic or apyrimidinic (AP) sites, generating a 3'-hydroxyl group and a 5'-terminal sugar phosphate. In Shigella dysenteriae serotype 1 (strain Sd197), this protein is Probable endonuclease 4.